The chain runs to 408 residues: tRNA-specific 2-thiouridylase MnmA (408 aa).

Residues 27–34 and Leu53 each bind ATP; that span reads AMSGGVDS. Cys121 functions as the Nucleophile in the catalytic mechanism. Cys121 and Cys222 are oxidised to a cystine. Gly145 serves as a coordination point for ATP. Positions 172–174 are interaction with tRNA; sequence RDQ. Cys222 (cysteine persulfide intermediate) is an active-site residue.

The protein belongs to the MnmA/TRMU family.

The protein localises to the cytoplasm. It catalyses the reaction S-sulfanyl-L-cysteinyl-[protein] + uridine(34) in tRNA + AH2 + ATP = 2-thiouridine(34) in tRNA + L-cysteinyl-[protein] + A + AMP + diphosphate + H(+). In terms of biological role, catalyzes the 2-thiolation of uridine at the wobble position (U34) of tRNA, leading to the formation of s(2)U34. The polypeptide is tRNA-specific 2-thiouridylase MnmA (Rhizobium johnstonii (strain DSM 114642 / LMG 32736 / 3841) (Rhizobium leguminosarum bv. viciae)).